We begin with the raw amino-acid sequence, 39 residues long: uncharacterized protein (39 aa).

This is an uncharacterized protein from Bacillus subtilis (strain 168).